Reading from the N-terminus, the 568-residue chain is Periplasmic pectate lyase (568 aa).

The N-terminal stretch at 1 to 19 is a signal peptide; the sequence is MKRFALSLLAGLVALQASA.

The protein belongs to the polysaccharide lyase 2 family.

It is found in the periplasm. It catalyses the reaction Eliminative cleavage of (1-&gt;4)-alpha-D-galacturonan to give oligosaccharides with 4-deoxy-alpha-D-galact-4-enuronosyl groups at their non-reducing ends.. It functions in the pathway glycan metabolism; pectin degradation; 2-dehydro-3-deoxy-D-gluconate from pectin: step 2/5. The chain is Periplasmic pectate lyase (pelB) from Pectobacterium carotovorum subsp. carotovorum (Erwinia carotovora subsp. carotovora).